Here is a 511-residue protein sequence, read N- to C-terminus: FAD-dependent monooxygenase AOL_s00215g279 (511 aa).

The N-terminal stretch at 1–17 (MRFTLYGLLGFASLLHA) is a signal peptide. One can recognise an FAD-binding PCMH-type domain in the interval 85–256 (CWVNPACIVS…TEFDLRTRYS (172 aa)). The residue at position 122 (H122) is a Pros-8alpha-FAD histidine.

It belongs to the oxygen-dependent FAD-linked oxidoreductase family.

It participates in secondary metabolite biosynthesis; terpenoid biosynthesis. Functionally, FAD-dependent monooxygenase; part of the gene cluster that mediates the biosynthesis of sesquiterpenyl epoxy-cyclohexenoids (SECs) such as anthrobotrisins and arthrosporols, metabolites that possess a novel hybrid carbon skeleton consisting of a polyketide-derived epoxycyclohexenol combined with a terpenoid-derived monocyclic sesquiterpenol substructure (PKS-PTS hybrid). The SEC pathway plays an important role for fungal soil colonization via decreasing fungal nematode-capturing ability. Within the pathway, the FAD-dependent monooxygenase AOL_s00215g279 plays a role in the oxygenation of the phenol moiety, most likely in the epoxy formation. The pathway begins with the biosynthesis of 6-methylsalicylic acid (6-MSA), the first precursor of the polyketide-derived epoxycyclohexenol in arthrosporols, by the polyketide synthase (PKS) AOL_s00215g283 via condensation of 1 acetate and 3 malonate units. The 6-methylsalicylic acid decarboxylase AOL_s00215g281 then catalyzes the decarboxylation of 6-methylsalicylic acid to yield m-cresol. The cytochrome P450 monooxygenase AOL_s00215g282 further oxidizes m-cresol to yield toluquinol. With the assistance of the oxidoreductase AOL_s00215g277, the polyprenyl transferase AOL_s00215g276 catalyzes the farnesylation of toluquinol to produce farnesyl hydroquinone, the hybrid precursor for biosynthesis of SECs. Farnesyl hydroquinone undergoes epoxidation and then subsequent dehydrogenation to form farnesyl epoxy-quinone, the first and simplest SEC. The cytochrome P450 monooxygenase AOL_s00215g278 and the FAD-dependent monooxygenase AOL_s00215g279 might be involved in the oxygenation of the phenol moiety, most likely in the epoxy formation. The cytochrome P450 monooxygenases AOL_s00215g274 and AOL_s00215g280 are involved in specific regional ketone reductions at respectively C-4 and C-1 of farnesyl epoxy-quinone PubMed:33823587. This Arthrobotrys oligospora (strain ATCC 24927 / CBS 115.81 / DSM 1491) (Nematode-trapping fungus) protein is FAD-dependent monooxygenase AOL_s00215g279.